The chain runs to 414 residues: Snake venom metalloproteinase atrolysin-B (414 aa).

An N-terminal signal peptide occupies residues 1-20 (MIEVLLVTICLAVFPYQGSS). The propeptide occupies 21 to 190 (IILESGNVND…KASDLNLNPD (170 aa)). Glutamine 191 bears the Pyrrolidone carboxylic acid mark. Residues 197–393 (RYIELVVVAD…YKPQCILNKP (197 aa)) enclose the Peptidase M12B domain. Ca(2+)-binding residues include glutamate 200 and aspartate 284. Disulfide bonds link cysteine 308/cysteine 388 and cysteine 348/cysteine 355. Histidine 333 lines the Zn(2+) pocket. Residue glutamate 334 is part of the active site. Zn(2+) is bound by residues histidine 337 and histidine 343. Ca(2+) is bound by residues cysteine 388, asparagine 391, valine 403, asparagine 406, leucine 408, glutamate 410, and glutamate 413. Residues 394–414 (LRIDPVSTPVSGNELLEAGEE) constitute a propeptide that is removed on maturation.

It belongs to the venom metalloproteinase (M12B) family. P-I subfamily. Monomer. Zn(2+) is required as a cofactor. Post-translationally, the N-terminus is blocked. Expressed by the venom gland.

Its subcellular location is the secreted. It catalyses the reaction Cleavage of 5-His-|-Leu-6, 10-His-|-Leu-11, 14-Ala-|-Leu-15, 16-Tyr-|-Leu-17 and 23-Gly-|-Phe-24 of insulin B chain. Identical to the cleavage of insulin B chain by atrolysin C. Also cleaves Xaa-|-Ser bonds in glucagon.. Snake venom metalloproteinase that impairs hemostasis in the envenomed animal. The sequence is that of Snake venom metalloproteinase atrolysin-B from Crotalus atrox (Western diamondback rattlesnake).